We begin with the raw amino-acid sequence, 112 residues long: Cuticle protein AM1239 (112 aa).

The 70-residue stretch at 16-85 folds into the Chitin-binding type R&amp;R domain; the sequence is DGNFNYRFET…FIPTDHPLPA (70 aa). Threonine 79 carries O-linked (HexNAc) threonine glycosylation.

As to expression, arthrodial membrane.

In Cancer pagurus (Rock crab), this protein is Cuticle protein AM1239.